The chain runs to 317 residues: Dimethyladenosine transferase (317 aa).

A disordered region spans residues 1–22 (MAKAPAKKFSGGAQRESAGGEQ). Positions 37, 39, 64, 85, 113, and 128 each coordinate S-adenosyl-L-methionine.

It belongs to the class I-like SAM-binding methyltransferase superfamily. rRNA adenine N(6)-methyltransferase family.

It carries out the reaction adenosine(1779)/adenosine(1780) in 18S rRNA + 4 S-adenosyl-L-methionine = N(6)-dimethyladenosine(1779)/N(6)-dimethyladenosine(1780) in 18S rRNA + 4 S-adenosyl-L-homocysteine + 4 H(+). In terms of biological role, specifically dimethylates two adjacent adenosines in the loop of a conserved hairpin near the 3'-end of 18S rRNA in the 40S particle. The polypeptide is Dimethyladenosine transferase (DIM1) (Yarrowia lipolytica (strain CLIB 122 / E 150) (Yeast)).